The sequence spans 214 residues: Cell division protein SepF (214 aa).

The tract at residues 24–120 (DNYEEYEERK…NTRRAQESTA (97 aa)) is disordered. Residues 30 to 40 (EERKAVNEPPR) are compositionally biased toward basic and acidic residues. Residues 55 to 67 (ESYSQPAYTQQSE) are compositionally biased toward polar residues. A compositionally biased stretch (basic and acidic residues) spans 69 to 98 (VVEKPSARYRSAEAHQERDTQQAAYTEKKV). A compositionally biased stretch (polar residues) spans 101 to 120 (MRSSNQSATTNTRRAQESTA).

The protein belongs to the SepF family. In terms of assembly, homodimer. Interacts with FtsZ.

It localises to the cytoplasm. Cell division protein that is part of the divisome complex and is recruited early to the Z-ring. Probably stimulates Z-ring formation, perhaps through the cross-linking of FtsZ protofilaments. Its function overlaps with FtsA. This Enterococcus faecalis (strain ATCC 700802 / V583) protein is Cell division protein SepF.